The chain runs to 379 residues: Lipoyl synthase 2, mitochondrial (379 aa).

Positions 106, 111, 117, 137, 141, 144, and 352 each coordinate [4Fe-4S] cluster. A Radical SAM core domain is found at 122–341; it reads EHGTQTATIM…EERGNELGFL (220 aa).

It belongs to the radical SAM superfamily. Lipoyl synthase family. [4Fe-4S] cluster is required as a cofactor.

It localises to the mitochondrion. The enzyme catalyses [[Fe-S] cluster scaffold protein carrying a second [4Fe-4S](2+) cluster] + N(6)-octanoyl-L-lysyl-[protein] + 2 oxidized [2Fe-2S]-[ferredoxin] + 2 S-adenosyl-L-methionine + 4 H(+) = [[Fe-S] cluster scaffold protein] + N(6)-[(R)-dihydrolipoyl]-L-lysyl-[protein] + 4 Fe(3+) + 2 hydrogen sulfide + 2 5'-deoxyadenosine + 2 L-methionine + 2 reduced [2Fe-2S]-[ferredoxin]. It participates in protein modification; protein lipoylation via endogenous pathway; protein N(6)-(lipoyl)lysine from octanoyl-[acyl-carrier-protein]: step 2/2. Catalyzes the radical-mediated insertion of two sulfur atoms into the C-6 and C-8 positions of the octanoyl moiety bound to the lipoyl domains of lipoate-dependent enzymes, thereby converting the octanoylated domains into lipoylated derivatives. The protein is Lipoyl synthase 2, mitochondrial of Drosophila yakuba (Fruit fly).